Reading from the N-terminus, the 494-residue chain is Cobyric acid synthase (494 aa).

Residues glutamate 248–tryptophan 444 enclose the GATase cobBQ-type domain. Residue cysteine 329 is the Nucleophile of the active site. Histidine 436 is an active-site residue.

Belongs to the CobB/CobQ family. CobQ subfamily.

It functions in the pathway cofactor biosynthesis; adenosylcobalamin biosynthesis. Functionally, catalyzes amidations at positions B, D, E, and G on adenosylcobyrinic A,C-diamide. NH(2) groups are provided by glutamine, and one molecule of ATP is hydrogenolyzed for each amidation. The chain is Cobyric acid synthase from Prochlorococcus marinus (strain NATL1A).